The sequence spans 703 residues: Methionine--tRNA ligase (703 aa).

The short motif at 12-22 is the 'HIGH' region element; the sequence is PYANGPLHIGH. Zn(2+) contacts are provided by C143, C146, C156, and C159. The 'KMSKS' region motif lies at 331–335; it reads KMSKT. Position 334 (K334) interacts with ATP. Low complexity-rich tracts occupy residues 556-568 and 577-594; these read AAPQ…PAKG and EAPA…AAES. 2 disordered regions span residues 556-594 and 682-703; these read AAPQ…AAES and GPGG…SEVK. In terms of domain architecture, tRNA-binding spans 602–703; the sequence is DFAKVVLKAG…GDVAPGSEVK (102 aa).

Belongs to the class-I aminoacyl-tRNA synthetase family. MetG type 1 subfamily. In terms of assembly, homodimer. It depends on Zn(2+) as a cofactor.

It localises to the cytoplasm. It carries out the reaction tRNA(Met) + L-methionine + ATP = L-methionyl-tRNA(Met) + AMP + diphosphate. Is required not only for elongation of protein synthesis but also for the initiation of all mRNA translation through initiator tRNA(fMet) aminoacylation. The protein is Methionine--tRNA ligase of Myxococcus xanthus (strain DK1622).